We begin with the raw amino-acid sequence, 278 residues long: 4-hydroxy-3-methylbut-2-enyl diphosphate reductase (278 aa).

C12 is a binding site for [4Fe-4S] cluster. (2E)-4-hydroxy-3-methylbut-2-enyl diphosphate-binding residues include H40 and H75. Residues H40 and H75 each contribute to the dimethylallyl diphosphate site. Isopentenyl diphosphate contacts are provided by H40 and H75. Position 97 (C97) interacts with [4Fe-4S] cluster. (2E)-4-hydroxy-3-methylbut-2-enyl diphosphate is bound at residue H125. H125 contributes to the dimethylallyl diphosphate binding site. H125 serves as a coordination point for isopentenyl diphosphate. The active-site Proton donor is the E127. Position 157 (T157) interacts with (2E)-4-hydroxy-3-methylbut-2-enyl diphosphate. Position 187 (C187) interacts with [4Fe-4S] cluster. The (2E)-4-hydroxy-3-methylbut-2-enyl diphosphate site is built by S215, S216, N217, and S258. 4 residues coordinate dimethylallyl diphosphate: S215, S216, N217, and S258. Isopentenyl diphosphate-binding residues include S215, S216, N217, and S258.

This sequence belongs to the IspH family. [4Fe-4S] cluster serves as cofactor.

The catalysed reaction is isopentenyl diphosphate + 2 oxidized [2Fe-2S]-[ferredoxin] + H2O = (2E)-4-hydroxy-3-methylbut-2-enyl diphosphate + 2 reduced [2Fe-2S]-[ferredoxin] + 2 H(+). The enzyme catalyses dimethylallyl diphosphate + 2 oxidized [2Fe-2S]-[ferredoxin] + H2O = (2E)-4-hydroxy-3-methylbut-2-enyl diphosphate + 2 reduced [2Fe-2S]-[ferredoxin] + 2 H(+). Its pathway is isoprenoid biosynthesis; dimethylallyl diphosphate biosynthesis; dimethylallyl diphosphate from (2E)-4-hydroxy-3-methylbutenyl diphosphate: step 1/1. It participates in isoprenoid biosynthesis; isopentenyl diphosphate biosynthesis via DXP pathway; isopentenyl diphosphate from 1-deoxy-D-xylulose 5-phosphate: step 6/6. Its function is as follows. Catalyzes the conversion of 1-hydroxy-2-methyl-2-(E)-butenyl 4-diphosphate (HMBPP) into a mixture of isopentenyl diphosphate (IPP) and dimethylallyl diphosphate (DMAPP). Acts in the terminal step of the DOXP/MEP pathway for isoprenoid precursor biosynthesis. The protein is 4-hydroxy-3-methylbut-2-enyl diphosphate reductase of Pseudothermotoga lettingae (strain ATCC BAA-301 / DSM 14385 / NBRC 107922 / TMO) (Thermotoga lettingae).